Reading from the N-terminus, the 930-residue chain is Short transient receptor potential channel 6 (930 aa).

Residues 1-27 form a disordered region; that stretch reads MSQSPRFVTRRGGSLKAAPGAGTRRNE. Over 1–437 the chain is Cytoplasmic; it reads MSQSPRFVTR…CSKMGKILRG (437 aa). ANK repeat units lie at residues 96–125, 131–160, 162–188, and 217–246; these read IEEE…SLNV, MGQN…LSRV, DALL…FAEG, and HDVT…RIER. A helical membrane pass occupies residues 438–458; it reads PFMKFVAHAASFTIFLGLLVM. At 459–486 the chain is on the extracellular side; the sequence is NAADRFEGTKLLPNETSTDNARQLFRMK. A helical transmembrane segment spans residues 487–507; sequence TSCFSWMEMLIISWVIGMIWA. Topologically, residues 508–520 are cytoplasmic; the sequence is ECKEIWTQGPKEY. Residues 521 to 541 traverse the membrane as a helical segment; the sequence is LFELWNMLDFGMLAIFAASFI. At 542–591 the chain is on the extracellular side; it reads ARFMAFWHASKAQSIIDANDTLKDLTKVTLGDNVKYYNLARIKWDPTDPQ. Asparagine 560 is a glycosylation site (N-linked (GlcNAc...) asparagine). Residues 592-612 form a helical membrane-spanning segment; sequence IISEGLYAIAVVLSFSRIAYI. The Cytoplasmic portion of the chain corresponds to 613–635; the sequence is LPANESFGPLQISLGRTVKDIFK. The chain crosses the membrane as a helical span at residues 636-656; sequence FMVIFIMVFVAFMIGMFNLYS. Residues 657–705 lie on the Extracellular side of the membrane; it reads YYIGAKQNEAFTTVEESFKTLFWAIFGLSEVKSVVINYNHKFIENIGYV. A helical membrane pass occupies residues 706–726; that stretch reads LYGVYNVTMVIVLLNMLIAMI. Over 727-930 the chain is Cytoplasmic; sequence NSSFQEIEDD…LEPKLEESRR (204 aa). A Phosphoserine modification is found at serine 814.

It belongs to the transient receptor (TC 1.A.4) family. STrpC subfamily. TRPC6 sub-subfamily. In terms of assembly, homodimer; forms channel complex. Interacts with MX1 and RNF24. Phosphorylated by FYN, leading to an increase of TRPC6 channel activity. In terms of processing, N-glycosylated. As to expression, lung and brain.

Its subcellular location is the cell membrane. It carries out the reaction Ca(2+)(in) = Ca(2+)(out). Its function is as follows. Forms a receptor-activated non-selective calcium permeant cation channel. Probably is operated by a phosphatidylinositol second messenger system activated by receptor tyrosine kinases or G-protein coupled receptors. Activated by diacylglycerol (DAG) in a membrane-delimited fashion, independently of protein kinase C. Seems not to be activated by intracellular calcium store depletion. The chain is Short transient receptor potential channel 6 from Mus musculus (Mouse).